The sequence spans 293 residues: Single-pass membrane and coiled-coil domain-containing protein 2 (293 aa).

Residues 116-188 (KNLLEFLLKD…SAKLRMYQME (73 aa)) are a coiled coil. A helical transmembrane segment spans residues 234-254 (IFIMFYVLTVTGLLCYILFFG).

It localises to the membrane. The sequence is that of Single-pass membrane and coiled-coil domain-containing protein 2 (SMCO2) from Macaca fascicularis (Crab-eating macaque).